A 246-amino-acid chain; its full sequence is Probable transcriptional regulatory protein CTC_02215 (246 aa).

This sequence belongs to the TACO1 family.

The protein resides in the cytoplasm. The protein is Probable transcriptional regulatory protein CTC_02215 of Clostridium tetani (strain Massachusetts / E88).